We begin with the raw amino-acid sequence, 116 residues long: Large ribosomal subunit protein bL19 (116 aa).

This sequence belongs to the bacterial ribosomal protein bL19 family.

This protein is located at the 30S-50S ribosomal subunit interface and may play a role in the structure and function of the aminoacyl-tRNA binding site. In Staphylococcus haemolyticus (strain JCSC1435), this protein is Large ribosomal subunit protein bL19.